The sequence spans 141 residues: Acetyltransferase YpeA (141 aa).

One can recognise an N-acetyltransferase domain in the interval 1–141; that stretch reads MEIRVFRQED…GKRLIEDEEY (141 aa).

It belongs to the acetyltransferase family. YpeA subfamily.

This Escherichia coli O157:H7 protein is Acetyltransferase YpeA.